Reading from the N-terminus, the 151-residue chain is Large ribosomal subunit protein bL9 (151 aa).

The protein belongs to the bacterial ribosomal protein bL9 family.

Binds to the 23S rRNA. This Prochlorococcus marinus (strain MIT 9215) protein is Large ribosomal subunit protein bL9.